We begin with the raw amino-acid sequence, 326 residues long: tRNA-modifying protein YgfZ (326 aa).

Folate contacts are provided by Trp27 and Trp189.

The protein belongs to the tRNA-modifying YgfZ family.

It localises to the cytoplasm. Functionally, folate-binding protein involved in regulating the level of ATP-DnaA and in the modification of some tRNAs. It is probably a key factor in regulatory networks that act via tRNA modification, such as initiation of chromosomal replication. The sequence is that of tRNA-modifying protein YgfZ from Salmonella paratyphi C (strain RKS4594).